The chain runs to 577 residues: Scoloptoxin SSD14 (577 aa).

The N-terminal stretch at 1–25 is a signal peptide; that stretch reads MGTSYRKLGYVLFLMLGMIVEEGIA.

In terms of assembly, heterodimer composed of subunits alpha and beta; probably disulfide-linked. As to expression, expressed by the venom gland.

The protein resides in the secreted. Its function is as follows. Dose-dependently induces human platelet aggregation on both plasma rich platelet and washed platelet (max. response at 3.2 ug/mL) and causes hemolysis against mouse and rabbit erythrocytes (35 and 65% respectively at 5 ug/mL). Does not show hemolytic activity against human erythrocytes (even at 100 ug/mL). This Scolopendra dehaani (Thai centipede) protein is Scoloptoxin SSD14.